Here is a 537-residue protein sequence, read N- to C-terminus: Tegument protein BRRF2 (537 aa).

Disordered regions lie at residues 321–366 (RPRF…AVPP), 378–398 (AKQNRGGMGSLHLAKPEETSP), 414–466 (SKQH…DEEF), and 486–537 (GLRV…LSVV). A compositionally biased stretch (polar residues) spans 334-347 (EPQQTCSQLTSRGN). Low complexity predominate over residues 423-441 (SSQAAPSFSSVAPVASLSG). Acidic residues predominate over residues 492–517 (DEDEDGSEDGEFSDLDLSDSDHEGDE).

The protein belongs to the lymphocryptovirus BRRF2 family.

The protein localises to the virion tegument. The protein is Tegument protein BRRF2 of Homo sapiens (Human).